Here is a 363-residue protein sequence, read N- to C-terminus: 5-formaminoimidazole-4-carboxamide-1-(beta)-D-ribofuranosyl 5'-monophosphate synthetase (363 aa).

Residues histidine 29 and serine 96 each contribute to the 5-amino-1-(5-phospho-beta-D-ribosyl)imidazole-4-carboxamide site. Residues 118–354 (RDILRWEAER…IALEIKNAIK (237 aa)) form the ATP-grasp domain. ATP contacts are provided by residues 148–210 (PSEI…CNYC) and glutamate 232. Residue asparagine 260 participates in 5-amino-1-(5-phospho-beta-D-ribosyl)imidazole-4-carboxamide binding. Mg(2+) contacts are provided by glutamine 299 and glutamate 312.

The protein belongs to the phosphohexose mutase family. Mg(2+) serves as cofactor. Requires Mn(2+) as cofactor.

The enzyme catalyses 5-amino-1-(5-phospho-beta-D-ribosyl)imidazole-4-carboxamide + formate + ATP = 5-formamido-1-(5-phospho-D-ribosyl)imidazole-4-carboxamide + ADP + phosphate. Its pathway is purine metabolism; IMP biosynthesis via de novo pathway; 5-formamido-1-(5-phospho-D-ribosyl)imidazole-4-carboxamide from 5-amino-1-(5-phospho-D-ribosyl)imidazole-4-carboxamide (formate route): step 1/1. Catalyzes the ATP- and formate-dependent formylation of 5-aminoimidazole-4-carboxamide-1-beta-d-ribofuranosyl 5'-monophosphate (AICAR) to 5-formaminoimidazole-4-carboxamide-1-beta-d-ribofuranosyl 5'-monophosphate (FAICAR) in the absence of folates. The protein is 5-formaminoimidazole-4-carboxamide-1-(beta)-D-ribofuranosyl 5'-monophosphate synthetase of Methanobrevibacter smithii (strain ATCC 35061 / DSM 861 / OCM 144 / PS).